The following is a 347-amino-acid chain: Histidinol-phosphate aminotransferase (347 aa).

Lysine 209 is subject to N6-(pyridoxal phosphate)lysine.

This sequence belongs to the class-II pyridoxal-phosphate-dependent aminotransferase family. Histidinol-phosphate aminotransferase subfamily. As to quaternary structure, homodimer. Pyridoxal 5'-phosphate is required as a cofactor.

It carries out the reaction L-histidinol phosphate + 2-oxoglutarate = 3-(imidazol-4-yl)-2-oxopropyl phosphate + L-glutamate. It functions in the pathway amino-acid biosynthesis; L-histidine biosynthesis; L-histidine from 5-phospho-alpha-D-ribose 1-diphosphate: step 7/9. The polypeptide is Histidinol-phosphate aminotransferase (Syntrophotalea carbinolica (strain DSM 2380 / NBRC 103641 / GraBd1) (Pelobacter carbinolicus)).